The sequence spans 540 residues: Phosphoenolpyruvate carboxykinase (ATP) (540 aa).

Arg-65 provides a ligand contact to substrate. At Lys-87 the chain carries N6-acetyllysine. Positions 207 and 213 each coordinate substrate. ATP is bound by residues Lys-213, His-232, and 248–256 (GLSGTGKTT). Mn(2+) contacts are provided by Lys-213 and His-232. Mn(2+) is bound at residue Asp-269. ATP-binding positions include Glu-297, Arg-333, 449–450 (RI), and Thr-455. Position 333 (Arg-333) interacts with substrate. Lys-523 is subject to N6-acetyllysine.

It belongs to the phosphoenolpyruvate carboxykinase (ATP) family. As to quaternary structure, monomer. Mn(2+) serves as cofactor.

It is found in the cytoplasm. It catalyses the reaction oxaloacetate + ATP = phosphoenolpyruvate + ADP + CO2. Its pathway is carbohydrate biosynthesis; gluconeogenesis. In terms of biological role, involved in the gluconeogenesis. Catalyzes the conversion of oxaloacetate (OAA) to phosphoenolpyruvate (PEP) through direct phosphoryl transfer between the nucleoside triphosphate and OAA. The polypeptide is Phosphoenolpyruvate carboxykinase (ATP) (Escherichia coli O6:H1 (strain CFT073 / ATCC 700928 / UPEC)).